A 606-amino-acid polypeptide reads, in one-letter code: Chaperone protein DnaK (606 aa).

The residue at position 174 (threonine 174) is a Phosphothreonine; by autocatalysis. Residues 579 to 593 are compositionally biased toward polar residues; the sequence is ASAAGNPGQGQTNEN. Residues 579–606 are disordered; it reads ASAAGNPGQGQTNENPGGKTIDGDYKVN.

This sequence belongs to the heat shock protein 70 family.

Its function is as follows. Acts as a chaperone. This is Chaperone protein DnaK from Dictyoglomus thermophilum (strain ATCC 35947 / DSM 3960 / H-6-12).